Here is a 207-residue protein sequence, read N- to C-terminus: Small ribosomal subunit protein uS4 (207 aa).

A disordered region spans residues 31–55 (KCKLDSKPGQHGRTSGARTSDYGTQ). The segment covering 42–53 (GRTSGARTSDYG) has biased composition (polar residues). One can recognise an S4 RNA-binding domain in the interval 97–160 (SRLDNVVYRM…KKQARIVEAL (64 aa)).

It belongs to the universal ribosomal protein uS4 family. Part of the 30S ribosomal subunit. Contacts protein S5. The interaction surface between S4 and S5 is involved in control of translational fidelity.

Functionally, one of the primary rRNA binding proteins, it binds directly to 16S rRNA where it nucleates assembly of the body of the 30S subunit. In terms of biological role, with S5 and S12 plays an important role in translational accuracy. The polypeptide is Small ribosomal subunit protein uS4 (Burkholderia lata (strain ATCC 17760 / DSM 23089 / LMG 22485 / NCIMB 9086 / R18194 / 383)).